A 489-amino-acid chain; its full sequence is Protein LMBR1L (489 aa).

The Extracellular segment spans residues 1–21 (MEAPDYEVLSVREQLFHERIR). An interaction with LGB region spans residues 1 to 59 (MEAPDYEVLSVREQLFHERIRECIISTLLFATLYILCHIFLTRFKKPAEFTTVDDEDAT). The tract at residues 1-76 (MEAPDYEVLS…LCTFTLAIAL (76 aa)) is LCN1-binding. A helical membrane pass occupies residues 22–42 (ECIISTLLFATLYILCHIFLT). Topologically, residues 43-66 (RFKKPAEFTTVDDEDATVNKIALE) are cytoplasmic. Residues 67–87 (LCTFTLAIALGAVLLLPFSII) traverse the membrane as a helical segment. The Extracellular segment spans residues 88–114 (SNEVLLSLPRNYYIQWLNGSLIHGLWN). Residues 115–135 (LVFLFSNLSLIFLMPFAYFFT) traverse the membrane as a helical segment. Topologically, residues 136–154 (ESEGFAGSRKGVLGRVYET) are cytoplasmic. The chain crosses the membrane as a helical span at residues 155 to 175 (VVMLMLLTLLVLGMVWVASAI). Over 176–196 (VDKNKANRESLYDFWEYYLPY) the chain is Extracellular. A helical transmembrane segment spans residues 197-217 (LYSCISFLGVLLLLVCTPLGL). The Cytoplasmic segment spans residues 218-305 (ARMFSVTGKL…NLGYPLAMLC (88 aa)). A helical transmembrane segment spans residues 306 to 326 (LLVLTGLSVLIVAIHILELLI). The Extracellular segment spans residues 327 to 350 (DEAAMPRGMQGTSLGQVSFSKLGS). The chain crosses the membrane as a helical span at residues 351-371 (FGAVIQVVLIFYLMVSSVVGF). Over 372–388 (YSSPLFRSLRPRWHDTA) the chain is Cytoplasmic. A helical transmembrane segment spans residues 389–409 (MTQIIGNCVCLLVLSSALPVF). The Extracellular portion of the chain corresponds to 410-431 (SRTLGLTRFDLLGDFGRFNWLG). Residues 432–452 (NFYIVFLYNAAFAGLTTLCLV) form a helical membrane-spanning segment. The Cytoplasmic segment spans residues 453–489 (KTFTAAVRAELIRAFGLDRLPLPVSGFPQASRKTQHQ).

Belongs to the LIMR family. Dimer. Can also form higher oligomers. Interacts with LCN1; this interaction mediates the endocytosis of LCN1. Interacts with UBAC2, FAF2, VCP, AMFR, ZNRF3, CTNNB1, LRP6, GSK3A and GSK3B. Interacts with DVL2 and RNF43. Interaction with SCGB1A1 has been observed in PubMed:16423471, but not in PubMed:23964685. Interaction with LGB which mediates the endocytosis of LGB has been observed in PubMed:17991420, but not in PubMed:23964685. In terms of tissue distribution, expressed in testis, pituitary gland, adrenal gland, trachea, placenta, thymus, cerebellum, stomach, mammary gland, spinal cord. A weaker expression is detected in colon, pancreas, and prostate.

The protein localises to the cell membrane. Its subcellular location is the endoplasmic reticulum membrane. In terms of biological role, plays an essential role in lymphocyte development by negatively regulating the canonical Wnt signaling pathway. In association with UBAC2 and E3 ubiquitin-protein ligase AMFR, promotes the ubiquitin-mediated degradation of CTNNB1 and Wnt receptors FZD6 and LRP6. LMBR1L stabilizes the beta-catenin destruction complex that is required for regulating CTNNB1 levels. Acts as a LCN1 receptor and can mediate its endocytosis. The protein is Protein LMBR1L (LMBR1L) of Homo sapiens (Human).